The following is a 256-amino-acid chain: MGRGRVQLKRIENKINRQVTFSKRRAGLLKKAHEISVLCDAEVALVVFSHKGKLFEYSTDSCMEKILERYERYSYAERQLIAPESDVNTNWSMEYNRLKAKIELLERNQRHYLGEDLNAMSPKELQNLEQQLDTALKHIRTRKNQLMYESINELQRKEKAIQEQNSMLSKQIKEREKILRAQQEQWDQQNHGHNMPPPPPPQQHQIQHPYMLSHQPSPFLNMGGLYQEEDPMAMRRNELELTLEPVYNCNLGCFAA.

One can recognise an MADS-box domain in the interval 1–61 (MGRGRVQLKR…GKLFEYSTDS (61 aa)). In terms of domain architecture, K-box spans 88 to 178 (NTNWSMEYNR…SKQIKEREKI (91 aa)). The interval 184–206 (EQWDQQNHGHNMPPPPPPQQHQI) is disordered.

As to quaternary structure, homodimer capable of binding to CArG-box sequences.

The protein resides in the nucleus. In terms of biological role, transcription factor that promotes early floral meristem identity in synergy with LEAFY. Displays a redundant function with CAULIFLOWER in the up-regulation of LEAFY. Required subsequently for the transition of an inflorescence meristem into a floral meristem, and for the normal development of sepals and petals in flowers. Regulates positively B class homeotic proteins. The sequence is that of Floral homeotic protein APETALA 1 (AP1) from Arabidopsis lyrata subsp. lyrata (Lyre-leaved rock-cress).